Here is a 192-residue protein sequence, read N- to C-terminus: Cytidylate kinase (192 aa).

12-20 (GLAGSGTTT) contacts ATP.

It belongs to the cytidylate kinase family. Type 2 subfamily.

The protein resides in the cytoplasm. The catalysed reaction is CMP + ATP = CDP + ADP. It carries out the reaction dCMP + ATP = dCDP + ADP. In Pyrococcus furiosus (strain ATCC 43587 / DSM 3638 / JCM 8422 / Vc1), this protein is Cytidylate kinase.